Consider the following 206-residue polypeptide: Probable GTP-binding protein EngB (206 aa).

The 173-residue stretch at 23–195 folds into the EngB-type G domain; it reads DLLEIAFVGR…WARIEAIMAE (173 aa). GTP contacts are provided by residues 31-38, 58-62, 76-79, 143-146, and 174-176; these read GRSNVGKS, GRTQL, DLPG, TKCD, and FSA. Positions 38 and 60 each coordinate Mg(2+).

The protein belongs to the TRAFAC class TrmE-Era-EngA-EngB-Septin-like GTPase superfamily. EngB GTPase family. The cofactor is Mg(2+).

In terms of biological role, necessary for normal cell division and for the maintenance of normal septation. This Geobacter sulfurreducens (strain ATCC 51573 / DSM 12127 / PCA) protein is Probable GTP-binding protein EngB.